We begin with the raw amino-acid sequence, 104 residues long: Glutaredoxin 1 (104 aa).

Residues 1–96 (MNKSILHTII…KLLETQPKNK (96 aa)) form the Glutaredoxin domain. A disulfide bond links Cys-17 and Cys-20.

The protein belongs to the glutaredoxin family. As to quaternary structure, monomer.

It is found in the cytoplasm. Has a glutathione-disulfide oxidoreductase activity in the presence of NADPH and glutathione reductase. Reduces low molecular weight disulfides and proteins. The chain is Glutaredoxin 1 (grxC1) from Rickettsia typhi (strain ATCC VR-144 / Wilmington).